We begin with the raw amino-acid sequence, 601 residues long: Glutathione-regulated potassium-efflux system protein KefB (601 aa).

13 helical membrane-spanning segments follow: residues 4–24, 29–49, 55–75, 87–107, 111–131, 152–172, 177–197, 207–227, 230–250, 262–282, 284–304, 324–344, and 356–376; these read ADLL…VPLA, IGAV…GLGF, EILH…GLEL, IFGV…GLLM, FLWQ…TAMA, VLLF…LLAG, HFDW…LIGG, FIAA…LVLS, LFMD…GVLL, AIDP…GMSL, LGVL…LVVI, MQFA…FSTA, and ALLL…MKGI. Residues 400–519 form the RCK N-terminal domain; that stretch reads KPQVVVVGFG…AGVTQFSRET (120 aa).

Belongs to the monovalent cation:proton antiporter 2 (CPA2) transporter (TC 2.A.37) family. KefB subfamily. In terms of assembly, interacts with the regulatory subunit KefG.

The protein resides in the cell inner membrane. Pore-forming subunit of a potassium efflux system that confers protection against electrophiles. Catalyzes K(+)/H(+) antiport. This chain is Glutathione-regulated potassium-efflux system protein KefB, found in Salmonella typhi.